Reading from the N-terminus, the 460-residue chain is MHSPPRDQAAIMLWKLVENVKYEDIYEDRHDGVPSHSSRLSQLGSVSQGPYSSAPPLSHTPSSDFQPPYFPPPYQPLPYHQSQDPYSHVNDPYSLNPLHQPQQHPWGQRQRQEVGSEAGSLLPQPRAALPQLSGLDPRRDYHSVRRPDVLLHSAHHGLDAGMGDSLSLHGLGHPGMEDVQSVEDANNSGMNLLDQSVIKKVPVPPKSVTSLMMNKDGFLGGMSVNTGEVFCSVPGRLSLLSSTSKYKVTVGEVQRRLSPPECLNASLLGGVLRRAKSKNGGRSLRERLEKIGLNLPAGRRKAANVTLLTSLVEGEAVHLARDFGYICETEFPAKAVSEYLNRQHTDPSDLHSRKNMLLATKQLCKEFTDLLAQDRTPIGNSRPSPILEPGIQSCLTHFSLITHGFGAPAICAALTALQNYLTEALKGMDKMFLNNTTTNRHTSGEGPGSKTGDKEEKHRK.

K21 is covalently cross-linked (Glycyl lysine isopeptide (Lys-Gly) (interchain with G-Cter in SUMO)). The interval 30 to 139 (HDGVPSHSSR…PQLSGLDPRR (110 aa)) is disordered. A compositionally biased stretch (polar residues) spans 35-51 (SHSSRLSQLGSVSQGPY). A compositionally biased stretch (low complexity) spans 121–132 (LLPQPRAALPQL). A Phosphoserine; by PKA modification is found at S258. Positions 435 to 460 (NTTTNRHTSGEGPGSKTGDKEEKHRK) are disordered. The span at 451-460 (TGDKEEKHRK) shows a compositional bias: basic and acidic residues.

The protein belongs to the AP-2 family. In terms of assembly, binds DNA as a dimer. Can form homodimers or heterodimers with other AP-2 family members. Interacts with CITED4. Interacts with UBE2I. Interacts with KCTD1; this interaction represses transcription activation. Interacts with CITED2 (via C-terminus); the interaction stimulates TFAP2B-transcriptional activity. Sumoylated on Lys-21; which inhibits transcriptional activity.

The protein resides in the nucleus. Functionally, sequence-specific DNA-binding protein that interacts with inducible viral and cellular enhancer elements to regulate transcription of selected genes. AP-2 factors bind to the consensus sequence 5'-GCCNNNGGC-3' and activate genes involved in a large spectrum of important biological functions including proper eye, face, body wall, limb and neural tube development. They also suppress a number of genes including MCAM/MUC18, C/EBP alpha and MYC. AP-2-beta appears to be required for normal face and limb development and for proper terminal differentiation and function of renal tubular epithelia. This Canis lupus familiaris (Dog) protein is Transcription factor AP-2-beta (TFAP2B).